A 350-amino-acid chain; its full sequence is Phosphotriesterase-related protein (350 aa).

Residues His24, His26, Glu170, His202, His231, and Asp299 each coordinate a divalent metal cation.

The protein belongs to the metallo-dependent hydrolases superfamily. Phosphotriesterase family. It depends on a divalent metal cation as a cofactor.

This chain is Phosphotriesterase-related protein, found in Nematostella vectensis (Starlet sea anemone).